The sequence spans 198 residues: Recombination protein RecR (198 aa).

The C4-type zinc finger occupies 57–72 (CSICGNITEEDPCEIC). The 96-residue stretch at 80 to 175 (SIILVVEEPK…TVTRLAHGLS (96 aa)) folds into the Toprim domain.

Belongs to the RecR family.

Its function is as follows. May play a role in DNA repair. It seems to be involved in an RecBC-independent recombinational process of DNA repair. It may act with RecF and RecO. The sequence is that of Recombination protein RecR from Enterococcus faecalis (strain ATCC 700802 / V583).